A 1058-amino-acid polypeptide reads, in one-letter code: Translation initiation factor IF-2 (1058 aa).

Residues 1–12 (MNDTKTPGDKTL) show a composition bias toward basic and acidic residues. Residues 1–468 (MNDTKTPGDK…MTGHRGMQES (468 aa)) form a disordered region. Residues 54 to 81 (APGEAGAPSGTPAAAPAATPAPAAAAPR) are compositionally biased toward low complexity. A compositionally biased stretch (pro residues) spans 82 to 95 (PATPAPAAPRPAAP). The span at 96–108 (ATPAQPAAEAKAP) shows a compositional bias: low complexity. Pro residues predominate over residues 109 to 119 (APAPTPAPAAP). Low complexity-rich tracts occupy residues 120-156 (AAPVAEAPKVEAPAPVAAKPEAAPAAPVAEAPKVEVP) and 164-228 (EPVA…QRPG). Positions 244–271 (RSGGPGSDRRGGPGGQNRPGQNRQGGSG) are enriched in gly residues. Positions 292 to 364 (ARVREVEERR…ARKRFGEETG (73 aa)) are enriched in basic and acidic residues. Over residues 368-396 (GASAPSTSTARPLTPRPAGTTTTTGAPAA) the composition is skewed to low complexity. A compositionally biased stretch (basic residues) spans 452–461 (FRRRTQRMTG). The region spanning 555–725 (PRPPVVTIMG…SLQSEVLDLK (171 aa)) is the tr-type G domain. Positions 564-571 (GHVDHGKT) are G1. Residue 564–571 (GHVDHGKT) coordinates GTP. The segment at 589–593 (GITQH) is G2. The G3 stretch occupies residues 611-614 (DTPG). GTP contacts are provided by residues 611-615 (DTPGH) and 665-668 (NKID). Positions 665-668 (NKID) are G4. Residues 701-703 (SAT) form a G5 region.

This sequence belongs to the TRAFAC class translation factor GTPase superfamily. Classic translation factor GTPase family. IF-2 subfamily.

Its subcellular location is the cytoplasm. In terms of biological role, one of the essential components for the initiation of protein synthesis. Protects formylmethionyl-tRNA from spontaneous hydrolysis and promotes its binding to the 30S ribosomal subunits. Also involved in the hydrolysis of GTP during the formation of the 70S ribosomal complex. In Azorhizobium caulinodans (strain ATCC 43989 / DSM 5975 / JCM 20966 / LMG 6465 / NBRC 14845 / NCIMB 13405 / ORS 571), this protein is Translation initiation factor IF-2.